The chain runs to 718 residues: Ribosomal RNA large subunit methyltransferase K/L (718 aa).

Positions 43–154 (TQYRILLWSR…QDELVVSLDL (112 aa)) constitute a THUMP domain.

It belongs to the methyltransferase superfamily. RlmKL family.

The protein localises to the cytoplasm. It carries out the reaction guanosine(2445) in 23S rRNA + S-adenosyl-L-methionine = N(2)-methylguanosine(2445) in 23S rRNA + S-adenosyl-L-homocysteine + H(+). It catalyses the reaction guanosine(2069) in 23S rRNA + S-adenosyl-L-methionine = N(2)-methylguanosine(2069) in 23S rRNA + S-adenosyl-L-homocysteine + H(+). Specifically methylates the guanine in position 2445 (m2G2445) and the guanine in position 2069 (m7G2069) of 23S rRNA. In Histophilus somni (strain 129Pt) (Haemophilus somnus), this protein is Ribosomal RNA large subunit methyltransferase K/L.